A 116-amino-acid chain; its full sequence is Somatostatin (116 aa).

The N-terminal stretch at 1-24 is a signal peptide; it reads MLSCRLQCALAALSIVLALGCVTG. The propeptide occupies 25–88; that stretch reads APSDPRLRQF…QDEMRLELQR (64 aa). Alanine amide is present on alanine 43. Residues 62–82 are disordered; that stretch reads QTENDALEPEDLSQAAEQDEM. Cysteines 105 and 116 form a disulfide.

The protein belongs to the somatostatin family. In terms of processing, C-terminal amidation of the neuronostatin peptide is required for its biological activity, including for the regulation of mean arterial pressure.

Its subcellular location is the secreted. Inhibits the secretion of pituitary hormones, including that of growth hormone/somatotropin (GH1), PRL, ACTH, luteinizing hormone (LH) and TSH. Also impairs ghrelin- and GnRH-stimulated secretion of GH1 and LH; the inhibition of ghrelin-stimulated secretion of GH1 can be further increased by neuronostatin. In terms of biological role, may enhance low-glucose-induced glucagon release by pancreatic alpha cells. This effect may be mediated by binding to GPR107 and PKA activation. May regulate cardiac contractile function. May compromise cardiomyocyte viability. In the central nervous system, may impair memory retention and may affect hippocampal excitability. May also have anxiolytic and anorexigenic effects. May play a role in arterial pressure regulation. May inhibit basal, but not ghrelin- or GnRH-stimulated secretion of GH1 or LH, but does not affect the release of other pituitary hormones, including PRL, ACTH, FSH or TSH. Potentiates inhibitory action of somatostatin on ghrelin-stimulated secretion of GH1, but not that on GnRH-stimulated secretion of LH. In Homo sapiens (Human), this protein is Somatostatin (SST).